A 236-amino-acid chain; its full sequence is MKKPLLLTLLCMILAGCDNPKSLESFTPEMASFSNEFDFDPLRGPVKDFSQTLMSENGEVAKQVTGTLSQEGCFDTLELHDLENNTGLALVLDANYYRDAQTLEKKVQLQGKCQLAALPSAGVTWETDDNGFVVSATGKEMKVEYRYDSEGYPLGKTTINSQNTLSVTAKPSADPRKKLDYTAVSRVNDRQVGNVTQSCEYDAYANPVDCRLVIVDESVKPAVSHHYTIKNRIDYY.

The N-terminal stretch at 1–16 (MKKPLLLTLLCMILAG) is a signal peptide. C17 is lipidated: N-palmitoyl cysteine. C17 carries the S-diacylglycerol cysteine lipid modification.

The protein belongs to the UPF0257 family.

It is found in the cell membrane. The protein is UPF0257 lipoprotein YnfC of Salmonella dublin (strain CT_02021853).